A 557-amino-acid chain; its full sequence is TGF-beta receptor type-2 (557 aa).

An N-terminal signal peptide occupies residues 1–23; the sequence is MPPRLRPLLLRVSLWVLVGSSSP. Residues 24-155 are Extracellular-facing; it reads ALLHDRSKEN…KPEEKDEISK (132 aa). Cystine bridges form between C41–C74, C44–C61, C51–C57, C67–C91, C111–C126, and C128–C133. N-linked (GlcNAc...) asparagine glycans are attached at residues N62 and N84. The chain crosses the membrane as a helical span at residues 156–176; sequence VTIISLVPLLVISVAVIVIFY. The Cytoplasmic portion of the chain corresponds to 177 to 557; sequence AYRTHKKRKL…PEDGSVTTAK (381 aa). Residues 234 to 537 enclose the Protein kinase domain; it reads IELDIVVGKG…FSEFKHHDKL (304 aa). ATP is bound by residues 240 to 248 and K267; that span reads VGKGRFAEV. D369 (proton acceptor) is an active-site residue.

This sequence belongs to the protein kinase superfamily. TKL Ser/Thr protein kinase family. TGFB receptor subfamily. In terms of assembly, heterohexamer; TGFB1, TGFB2 and TGFB3 homodimeric ligands assemble a functional receptor composed of two TGFBR1 and TGFBR2 heterodimers to form a ligand-receptor heterohexamer. The cofactor is Mg(2+). Mn(2+) serves as cofactor. In terms of processing, phosphorylated on a Ser/Thr residue in the cytoplasmic domain. As to expression, detected at low levels in embryonic heart, brain and lung. Detected at high levels in hatchling heart and lung.

It is found in the cell membrane. The protein localises to the membrane raft. It carries out the reaction L-threonyl-[receptor-protein] + ATP = O-phospho-L-threonyl-[receptor-protein] + ADP + H(+). It catalyses the reaction L-seryl-[receptor-protein] + ATP = O-phospho-L-seryl-[receptor-protein] + ADP + H(+). In terms of biological role, transmembrane serine/threonine kinase forming with the TGF-beta type I serine/threonine kinase receptor, TGFBR1, the non-promiscuous receptor for the TGF-beta cytokines TGFB1, TGFB2 and TGFB3. Transduces the TGFB1, TGFB2 and TGFB3 signal from the cell surface to the cytoplasm and is thus regulating a plethora of physiological and pathological processes including cell cycle arrest in epithelial and hematopoietic cells, control of mesenchymal cell proliferation and differentiation, wound healing, extracellular matrix production, immunosuppression and carcinogenesis. The formation of the receptor complex composed of 2 TGFBR1 and 2 TGFBR2 molecules symmetrically bound to the cytokine dimer results in the phosphorylation and the activation of TGFRB1 by the constitutively active TGFBR2. Activated TGFBR1 phosphorylates SMAD2 which dissociates from the receptor and interacts with SMAD4. The SMAD2-SMAD4 complex is subsequently translocated to the nucleus where it modulates the transcription of the TGF-beta-regulated genes. This constitutes the canonical SMAD-dependent TGF-beta signaling cascade. Also involved in non-canonical, SMAD-independent TGF-beta signaling pathways. In Gallus gallus (Chicken), this protein is TGF-beta receptor type-2 (TGFBR2).